Here is a 358-residue protein sequence, read N- to C-terminus: GTPase Obg (358 aa).

Residues 1 to 159 (MKFVDEVTIR…RNLHLELRLL (159 aa)) enclose the Obg domain. In terms of domain architecture, OBG-type G spans 160–334 (ADVGLLGMPN…LAQDVMNRLE (175 aa)). GTP-binding positions include 166–173 (GMPNAGKS), 191–195 (FTTLY), 213–216 (DIPG), 284–287 (NKLD), and 315–317 (SAL). Residues Ser-173 and Thr-193 each coordinate Mg(2+). The interval 337–358 (DEEAREAGERARREQRQEEGPE) is disordered. A compositionally biased stretch (basic and acidic residues) spans 341-358 (REAGERARREQRQEEGPE).

The protein belongs to the TRAFAC class OBG-HflX-like GTPase superfamily. OBG GTPase family. Monomer. The cofactor is Mg(2+).

It localises to the cytoplasm. Its function is as follows. An essential GTPase which binds GTP, GDP and possibly (p)ppGpp with moderate affinity, with high nucleotide exchange rates and a fairly low GTP hydrolysis rate. Plays a role in control of the cell cycle, stress response, ribosome biogenesis and in those bacteria that undergo differentiation, in morphogenesis control. The protein is GTPase Obg of Alkalilimnicola ehrlichii (strain ATCC BAA-1101 / DSM 17681 / MLHE-1).